Here is a 1152-residue protein sequence, read N- to C-terminus: P3N-PIPO polyprotein (1152 aa).

One can recognise a Peptidase S30 domain in the interval 292–437; the sequence is VMNQQTLMAF…HSITHRMVQY (146 aa). Residues H345, D354, and S388 each act as for P1 proteinase activity in the active site. Positions 489–492 match the Involved in interaction with stylet and aphid transmission motif; it reads KITC. An Involved in virions binding and aphid transmission motif is present at residues 747-749; that stretch reads PTK. The Peptidase C6 domain maps to 773 to 895; it reads MFVTKDGYCY…ESEMQHYRVG (123 aa). Active-site for helper component proteinase activity residues include C781 and H854.

The protein belongs to the potyviridae P3N-PIPO polyprotein family. As to quaternary structure, interacts (via PIPO domain) with host PCaP1 protein; this interaction may help to anchor the movement complex to the plasma membrane from which the complex could move to the plasmodesmata. In terms of processing, potyviral RNA is expressed as two polyproteins which undergo post-translational proteolytic processing. Genome polyprotein is processed by NIa-pro, P1 and HC-pro proteinases resulting in the production of at least ten individual proteins. P3N-PIPO is cleaved by P1 and HC-pro proteinases resulting in the production of three individual proteins. The P1 proteinase and the HC-pro cleave only their respective C-termini autocatalytically.

It localises to the host cell junction. It is found in the host plasmodesma. It carries out the reaction Hydrolyzes a Gly-|-Gly bond at its own C-terminus, commonly in the sequence -Tyr-Xaa-Val-Gly-|-Gly, in the processing of the potyviral polyprotein.. Required for aphid transmission and also has proteolytic activity. Only cleaves a Gly-Gly dipeptide at its own C-terminus. Interacts with virions and aphid stylets. Acts as a suppressor of RNA-mediated gene silencing, also known as post-transcriptional gene silencing (PTGS), a mechanism of plant viral defense that limits the accumulation of viral RNAs. May have RNA-binding activity. Functionally, allows efficient cell to cell propagation, by bypassing the host cell wall barrier. Transports viral genome to neighboring plant cells directly through plasmosdesmata, without any budding. The chain is P3N-PIPO polyprotein from Lettuce mosaic virus (strain 0 / isolate French) (LMV).